A 163-amino-acid chain; its full sequence is MLKRSLLFLTVLLLLFSFSSITNEVSASSSFDKGKYKKGDDASYFEPTGPYLMVNVTGVDGKGNELLSPHYVEFPIKPGTTLTKEKIEYYVEWALDATAYKEFRVVELDPSAKIEVTYYDKNKKKEETKSFPITEKGFVVPDLSEHIKNPGFNLITKVIIEKK.

Positions 1–27 (MLKRSLLFLTVLLLLFSFSSITNEVSA) are cleaved as a signal peptide.

The protein belongs to the staphylokinase family.

It localises to the secreted. Potent plasminogen activator that converts plasminogen into plasmin. It forms a 1:1 complex with plasmin, which in turn activates other plasminogen molecules. This chain is Staphylokinase (sak), found in Staphylococcus phage phi13 (Bacteriophage phi-13).